Here is a 109-residue protein sequence, read N- to C-terminus: Protein TAR1 (109 aa).

Positions 62 to 109 (HFTNNWDPRHTGFSPSMTSCSKEHRQGPATKLPSSNYNSDVEDARFQI) are disordered.

It is found in the mitochondrion. In terms of biological role, may be involved in mtDNA stability or mitochondrial gene expression regulation at the post-transcriptional level. The sequence is that of Protein TAR1 (TAR1-A) from Kluyveromyces lactis (strain ATCC 8585 / CBS 2359 / DSM 70799 / NBRC 1267 / NRRL Y-1140 / WM37) (Yeast).